Consider the following 167-residue polypeptide: Ribosome maturation factor RimM (167 aa).

One can recognise a PRC barrel domain in the interval 94–166; sequence QNRAWLHELE…YIVVPRFDEF (73 aa).

This sequence belongs to the RimM family. Binds ribosomal protein uS19.

Its subcellular location is the cytoplasm. An accessory protein needed during the final step in the assembly of 30S ribosomal subunit, possibly for assembly of the head region. Essential for efficient processing of 16S rRNA. May be needed both before and after RbfA during the maturation of 16S rRNA. It has affinity for free ribosomal 30S subunits but not for 70S ribosomes. This chain is Ribosome maturation factor RimM, found in Chlorobium phaeovibrioides (strain DSM 265 / 1930) (Prosthecochloris vibrioformis (strain DSM 265)).